Consider the following 312-residue polypeptide: Putative olfactory receptor 1F2 (312 aa).

At Met1–His25 the chain is on the extracellular side. Residues Leu26–Ile49 traverse the membrane as a helical segment. The Cytoplasmic segment spans residues Ser50–Thr57. A helical transmembrane segment spans residues Pro58–Pro78. Over Lys79–Gln99 the chain is Extracellular. Cys96 and Cys188 are oxidised to a cystine. Residues Met100–Tyr119 form a helical membrane-spanning segment. Residues Asp120–Gln138 are Cytoplasmic-facing. The helical transmembrane segment at Leu139–Leu157 threads the bilayer. Over His158–Glu195 the chain is Extracellular. The chain crosses the membrane as a helical span at residues Val196 to Met218. Topologically, residues His219–Lys235 are cytoplasmic. Residues Ala236–Tyr258 traverse the membrane as a helical segment. Residues Phe259–Ile271 lie on the Extracellular side of the membrane. A helical membrane pass occupies residues Ala272–Leu291. Residues Arg292 to Gln312 lie on the Cytoplasmic side of the membrane.

This sequence belongs to the G-protein coupled receptor 1 family.

It localises to the cell membrane. Its function is as follows. Odorant receptor. This chain is Putative olfactory receptor 1F2 (OR1F2P), found in Homo sapiens (Human).